Consider the following 118-residue polypeptide: MQTMGGEHLLLSQLKGSFFLLLLAYFFRGRSPYYARCYRRLAVTPGAITIAIAIATDSIPALAKSKVLVSVCSHTDPCTASCNLIPFPRPFSNSLTRFLFCLGSARFCISFPCFGLSI.

A run of 3 helical transmembrane segments spans residues 7–27, 41–61, and 98–118; these read EHLL…AYFF, LAVT…SIPA, and FLFC…GLSI.

It localises to the mitochondrion membrane. Involved in selective mitochondria autophagy (mitophagy). The protein is Altered inheritance of mitochondria protein 26, mitochondrial (AIM26) of Saccharomyces cerevisiae (strain ATCC 204508 / S288c) (Baker's yeast).